Reading from the N-terminus, the 306-residue chain is Protein translocase subunit SecF (306 aa).

Transmembrane regions (helical) follow at residues Ala-17–Ile-37, Gly-134–Trp-154, Leu-158–Phe-178, Thr-185–Phe-205, Leu-232–Gly-254, and Val-268–Leu-288.

Belongs to the SecD/SecF family. SecF subfamily. As to quaternary structure, forms a complex with SecD. Part of the essential Sec protein translocation apparatus which comprises SecA, SecYEG and auxiliary proteins SecDF-YajC and YidC.

It is found in the cell inner membrane. Part of the Sec protein translocase complex. Interacts with the SecYEG preprotein conducting channel. SecDF uses the proton motive force (PMF) to complete protein translocation after the ATP-dependent function of SecA. This Pseudomonas aeruginosa (strain ATCC 15692 / DSM 22644 / CIP 104116 / JCM 14847 / LMG 12228 / 1C / PRS 101 / PAO1) protein is Protein translocase subunit SecF.